The chain runs to 372 residues: DNA replication and repair protein RecF (372 aa).

30–37 (GENAQGKT) serves as a coordination point for ATP.

This sequence belongs to the RecF family.

It localises to the cytoplasm. Its function is as follows. The RecF protein is involved in DNA metabolism; it is required for DNA replication and normal SOS inducibility. RecF binds preferentially to single-stranded, linear DNA. It also seems to bind ATP. This Shouchella clausii (strain KSM-K16) (Alkalihalobacillus clausii) protein is DNA replication and repair protein RecF.